Reading from the N-terminus, the 336-residue chain is Cytoskeleton protein RodZ (336 aa).

Residues 1-111 (MNTEATHDKT…LGKRRKKRDG (111 aa)) lie on the Cytoplasmic side of the membrane. In terms of domain architecture, HTH cro/C1-type spans 19–71 (LRNAREQLGLSQQAVAERLCLKVSTVRDIEEDKAPADLASTFLRGYIRSYAKL). Positions 30 to 49 (QQAVAERLCLKVSTVRDIEE) form a DNA-binding region, H-T-H motif. Residues 112-132 (WLMSFTWLVLFVVIGLTGAWW) form a helical; Signal-anchor for type II membrane protein membrane-spanning segment. Residues 133–336 (WQNHKAQQEE…TVSAEQSAAQ (204 aa)) are Periplasmic-facing. The span at 152 to 164 (AALNNSGNNGAQS) shows a compositional bias: low complexity. The segment at 152-235 (AALNNSGNNG…TTTGNVNVTQ (84 aa)) is disordered. Polar residues-rich tracts occupy residues 165 to 190 (VPLN…TVEP) and 200 to 217 (PDQT…QANV). The span at 220–235 (APAVTPTTTGNVNVTQ) shows a compositional bias: low complexity.

The protein belongs to the RodZ family.

The protein localises to the cell inner membrane. Functionally, cytoskeletal protein that is involved in cell-shape control through regulation of the length of the long axis. The chain is Cytoskeleton protein RodZ from Enterobacter sp. (strain 638).